The chain runs to 339 residues: 4-amino-5-hydroxymethyl-2-methylpyrimidine phosphate synthase (339 aa).

Residue K62 is modified to N6-(pyridoxal phosphate)lysine. H66 is an active-site residue. 115–118 (GEFG) contributes to the pyridoxal 5'-phosphate binding site. The short motif at 195–199 (CCCFC) is the CCCFC; essential for catalytic activity, may be the site of iron coordination element.

The protein belongs to the NMT1/THI5 family. As to quaternary structure, homodimer. It depends on Fe(3+) as a cofactor.

It catalyses the reaction N(6)-(pyridoxal phosphate)-L-lysyl-[4-amino-5-hydroxymethyl-2-methylpyrimidine phosphate synthase] + L-histidyl-[4-amino-5-hydroxymethyl-2-methylpyrimidine phosphate synthase] + 2 Fe(3+) + 4 H2O = L-lysyl-[4-amino-5-hydroxymethyl-2-methylpyrimidine phosphate synthase] + (2S)-2-amino-5-hydroxy-4-oxopentanoyl-[4-amino-5-hydroxymethyl-2-methylpyrimidine phosphate synthase] + 4-amino-2-methyl-5-(phosphooxymethyl)pyrimidine + 3-oxopropanoate + 2 Fe(2+) + 2 H(+). The protein operates within cofactor biosynthesis; thiamine diphosphate biosynthesis. Functionally, responsible for the formation of the pyrimidine heterocycle in the thiamine biosynthesis pathway. Catalyzes the formation of hydroxymethylpyrimidine phosphate (HMP-P) from histidine and pyridoxal phosphate (PLP). The protein uses PLP and the active site histidine to form HMP-P, generating an inactive enzyme. The enzyme can only undergo a single turnover, which suggests it is a suicide enzyme. The chain is 4-amino-5-hydroxymethyl-2-methylpyrimidine phosphate synthase from Candida albicans (strain WO-1) (Yeast).